The chain runs to 633 residues: Chaperone protein DnaK (633 aa).

Thr196 is modified (phosphothreonine; by autocatalysis). The tract at residues 594–633 is disordered; it reads NLYGQPGAEPQPETNGHAGGSKGGDGAVNAEYEVIDGDDK. The segment covering 610–619 has biased composition (gly residues); the sequence is HAGGSKGGDG.

This sequence belongs to the heat shock protein 70 family.

In terms of biological role, acts as a chaperone. The sequence is that of Chaperone protein DnaK from Chlorobaculum tepidum (strain ATCC 49652 / DSM 12025 / NBRC 103806 / TLS) (Chlorobium tepidum).